Here is a 168-residue protein sequence, read N- to C-terminus: Diphosphoinositol polyphosphate phosphohydrolase 1 (168 aa).

Met1 bears the N-acetylmethionine mark. Residues Arg10, 18 to 20 (KKR), and 39 to 41 (SSR) each bind substrate. The Nudix hydrolase domain maps to 17-144 (YKKRAACLCF…VQASYFETLR (128 aa)). The Mg(2+) site is built by Gly50 and Glu66. The Nudix box signature appears at 51–72 (GGMEPEEEPSVAAVREVCEEAG). Residue Glu69 is the Proton acceptor of the active site. Glu70 contributes to the Mg(2+) binding site. Substrate contacts are provided by residues 89 to 91 (RKH), Arg115, and Lys133.

It belongs to the Nudix hydrolase family. DIPP subfamily. In terms of assembly, monomer. Mg(2+) is required as a cofactor. It depends on Mn(2+) as a cofactor. The cofactor is Zn(2+). In terms of tissue distribution, present in heart, lung, liver and spleen (at protein level). Widely expressed.

The protein resides in the cytoplasm. It localises to the nucleus. It catalyses the reaction diphospho-myo-inositol polyphosphate + H2O = myo-inositol polyphosphate + phosphate.. The enzyme catalyses 5-diphospho-1D-myo-inositol 1,2,3,4,6-pentakisphosphate + H2O = 1D-myo-inositol hexakisphosphate + phosphate + H(+). The catalysed reaction is 3,5-bis(diphospho)-1D-myo-inositol 1,2,4,6-tetrakisphosphate + H2O = 3-diphospho-1D-myo-inositol 1,2,4,5,6-pentakisphosphate + phosphate + 2 H(+). It carries out the reaction [phosphate](n+1) + n H2O = (n+1) phosphate + n H(+). It catalyses the reaction P(1),P(5)-bis(5'-adenosyl) pentaphosphate + H2O = ADP + ATP + 2 H(+). The enzyme catalyses P(1),P(6)-bis(5'-adenosyl) hexaphosphate + H2O = 2 ATP + 2 H(+). The catalysed reaction is P(1),P(4)-bis(5'-adenosyl) tetraphosphate + H2O = AMP + ATP + 2 H(+). It carries out the reaction a 5'-end (N(7)-methyl 5'-triphosphoguanosine)-ribonucleoside in mRNA + H2O = N(7)-methyl-GMP + a 5'-end diphospho-ribonucleoside in mRNA + 2 H(+). It catalyses the reaction a 5'-end (N(7)-methyl 5'-triphosphoguanosine)-ribonucleoside in mRNA + H2O = N(7)-methyl-GDP + a 5'-end phospho-ribonucleoside in mRNA + 2 H(+). Cleaves a beta-phosphate from the diphosphate groups in PP-InsP5 (diphosphoinositol pentakisphosphate) and [PP]2-InsP4 (bisdiphosphoinositol tetrakisphosphate), suggesting that it may play a role in signal transduction. InsP6 (inositol hexakisphosphate) is not a substrate. Also able to catalyze the hydrolysis of dinucleoside oligophosphates, with diadenosine 5',5'''-P1,P6-hexaphosphate (Ap6A) and diadenosine 5',5'''- P1,P5-pentaphosphate (Ap5A) being the preferred substrates. The major reaction products are ADP and p4a from Ap6A and ADP and ATP from Ap5A. Also able to hydrolyze 5- phosphoribose 1-diphosphate. Acts as a negative regulator of the ERK1/2 pathway. Acts as a decapping enzyme that can hydrolyze both monomethylated and unmethylated capped RNAs. Hydrolyzes monomethylated capped RNA after both the alpha- and beta-phosphates generating m7GMP + ppRNA and m7GDP + pRNA. Modulates the stability of a subset of mRNAs implicated in cell motility. Divalent cations zinc, magnesium and manganese determine its substrate specificity. Exhibits diphosphoinositol polyphosphate phosphohydrolase in the presence of magnesium ions, diadenosine hexaphosphate hydrolase activity in the presence of manganese ions and endopolyphosphatase activity in the presence of zinc ions. Plays an important role in limiting DNA damage and maintaining cell survival upon oxidative stress via its endopolyphosphatase activity. In Mus musculus (Mouse), this protein is Diphosphoinositol polyphosphate phosphohydrolase 1.